A 623-amino-acid polypeptide reads, in one-letter code: METRTPRDPNTLSNYHNYVTRHTSLDFEIEFERKRLVGSVVLRMESLTDAEVDVVLDSSFLDVSAIKVDRQSAEFSIGERIEPYGSPLTIKLPAAVPKGKTVEIELTVATTEKCTALQWMEPAQTSNKKHPYMFSQCQANHARSVFPCQDTPDVKSTFSFALRSPLPVLASGLPTGASKYQPAKKDGASGTLKYTFEQPVAITSYLMAVASGDLACASIGPRSTVWSGPEELLECQQELEGEIEPFMKAIESIVKPTYQWTQYNVLILPPSFPYGGMENPVWTYATPSIISGDKQNIDVIAHELSHSWSGNLVSAASWEHFWLNEGWTTYLERRIQGVLHGESHRHFSAIIGWKALEESIERYGADHDFTKLVIDLKGKDPDDAFSSIPYEKGFHALYQFELLLGKDKWDNFIPHYFETFKFKSIDSYDFKACLIDFFAKDTEANKKLAEFDWDKLFYAPGYPPKPDFDQTMVKSCYKLADKWQYLITNNSSSDFKPHHSDVADWVSNQSVVFLEKVQSFAEKFSAEQIHLLGHTYGYDKTQNIEVLSRYLSAGLMAKAPETYQPSAELLGRIGRMKFVRPMYRLLEKADRKLAVETFEKNKDFYHPICRSMVEKDLFGDEKK.

Residues 136–138 (QCQ) and 273–278 (PYGGME) contribute to the a peptide site. H302 lines the Zn(2+) pocket. The Proton acceptor role is filled by E303. 2 residues coordinate Zn(2+): H306 and E325. The Proton donor role is filled by Y390.

The protein belongs to the peptidase M1 family. Zn(2+) is required as a cofactor.

The protein resides in the cytoplasm. The protein localises to the nucleus. It catalyses the reaction an epoxide + H2O = an ethanediol. Functionally, aminopeptidase that preferentially cleaves di- and tripeptides. Also has low epoxide hydrolase activity (in vitro). Can hydrolyze the epoxide leukotriene LTA(4) but it forms preferentially 5,6-dihydroxy-7,9,11,14-eicosatetraenoic acid rather than the cytokine leukotriene B(4) as the product compared to the homologous mammalian enzyme (in vitro). The polypeptide is Leucine aminopeptidase 2 (Phaeosphaeria nodorum (strain SN15 / ATCC MYA-4574 / FGSC 10173) (Glume blotch fungus)).